A 180-amino-acid polypeptide reads, in one-letter code: Adenine phosphoribosyltransferase (180 aa).

The protein belongs to the purine/pyrimidine phosphoribosyltransferase family. As to quaternary structure, homodimer.

Its subcellular location is the cytoplasm. It carries out the reaction AMP + diphosphate = 5-phospho-alpha-D-ribose 1-diphosphate + adenine. It participates in purine metabolism; AMP biosynthesis via salvage pathway; AMP from adenine: step 1/1. Functionally, catalyzes a salvage reaction resulting in the formation of AMP, that is energically less costly than de novo synthesis. The protein is Adenine phosphoribosyltransferase of Mycolicibacterium smegmatis (strain ATCC 700084 / mc(2)155) (Mycobacterium smegmatis).